Reading from the N-terminus, the 441-residue chain is Ribosomal protein uS12 methylthiotransferase RimO (441 aa).

Residues 8–118 (PKIGFVSLGC…VLEHVHHYVP (111 aa)) form the MTTase N-terminal domain. 6 residues coordinate [4Fe-4S] cluster: C17, C53, C82, C150, C154, and C157. One can recognise a Radical SAM core domain in the interval 136–373 (LTPRHYAYLK…MQLQQQISAE (238 aa)). A TRAM domain is found at 376 to 441 (QEKVGREILV…DEYDLWGSRV (66 aa)).

It belongs to the methylthiotransferase family. RimO subfamily. [4Fe-4S] cluster is required as a cofactor.

It localises to the cytoplasm. It carries out the reaction L-aspartate(89)-[ribosomal protein uS12]-hydrogen + (sulfur carrier)-SH + AH2 + 2 S-adenosyl-L-methionine = 3-methylsulfanyl-L-aspartate(89)-[ribosomal protein uS12]-hydrogen + (sulfur carrier)-H + 5'-deoxyadenosine + L-methionine + A + S-adenosyl-L-homocysteine + 2 H(+). Functionally, catalyzes the methylthiolation of an aspartic acid residue of ribosomal protein uS12. This is Ribosomal protein uS12 methylthiotransferase RimO from Shigella boydii serotype 18 (strain CDC 3083-94 / BS512).